The sequence spans 555 residues: T-complex protein 1 subunit eta (555 aa).

The protein belongs to the TCP-1 chaperonin family. In terms of assembly, heterooligomeric complex of about 850 to 900 kDa that forms two stacked rings, 12 to 16 nm in diameter.

It is found in the cytoplasm. Its function is as follows. Molecular chaperone; assists the folding of proteins upon ATP hydrolysis. Known to play a role, in vitro, in the folding of actin and tubulin. In Dictyostelium discoideum (Social amoeba), this protein is T-complex protein 1 subunit eta (cct7).